The primary structure comprises 349 residues: 4-hydroxy-2-oxovalerate aldolase 2 (349 aa).

Residues 12–264 (VRMTDTSLRD…KTGIDFFDIA (253 aa)) form the Pyruvate carboxyltransferase domain. A substrate-binding site is contributed by 20–21 (RD). Residue Asp21 participates in Mn(2+) binding. Catalysis depends on His24, which acts as the Proton acceptor. Positions 174 and 203 each coordinate substrate. 2 residues coordinate Mn(2+): His203 and His205. Tyr294 contributes to the substrate binding site.

Belongs to the 4-hydroxy-2-oxovalerate aldolase family.

It carries out the reaction (S)-4-hydroxy-2-oxopentanoate = acetaldehyde + pyruvate. This is 4-hydroxy-2-oxovalerate aldolase 2 (bphI-2) from Mycolicibacterium smegmatis (strain ATCC 700084 / mc(2)155) (Mycobacterium smegmatis).